Reading from the N-terminus, the 576-residue chain is MSEEAAYQEDTAVQNTPADALSPVESDSNSALSTPSNKAERDDMKDFDENHEESNNYVEIPKKPASAYVTVSICCLMVAFGGFVFGWDTGTISGFVAQTDFIRRFGMKHHDGTYYLSKVRTGLMVSIINIGCAIGGIILAKLGDMYGRKMGLIVVVVIYIIGIIIQIASINKWYQYFIGRIISGLGVGGIAVLSPMLISEVSPKHIRGTLVSCYQLMITLGIFLGYCTNYGTKTYTNSVQWRVPLGLGFAWALFMIGGMTFVPESPRYLVEVGKIEEAKRSIALSNKVSADDPAVMAEVEVVQATVEAEKLAGNASWGEIFSTKTKVFQRLIMGAMIQSLQQLTGDNYFFYYGTTVFTAVGLSDSFETSIVLGIVNFASTFVGIFLVERYGRRRCLLWGAASMTACMVVFASVGVTRLWPNGKKNGSSKGAGNCMIVFTCFYLFCFATTWAPIPFVVNSETFPLRVKSKCMAIAQACNWIWGFLIGFFTPFISNAIDFYYGYVFMGCLVFSYFYVFFFVPETKGLTLEEVNTLWEEGVLPWKSPSWVPPNKRGTDYNADDLMHDDQPFYKKMFGKK.

The interval 1–56 (MSEEAAYQEDTAVQNTPADALSPVESDSNSALSTPSNKAERDDMKDFDENHEESNN) is disordered. The Cytoplasmic segment spans residues 1–66 (MSEEAAYQED…YVEIPKKPAS (66 aa)). The span at 25 to 37 (ESDSNSALSTPSN) shows a compositional bias: polar residues. Residues 38–54 (KAERDDMKDFDENHEES) show a composition bias toward basic and acidic residues. Lys45 participates in a covalent cross-link: Glycyl lysine isopeptide (Lys-Gly) (interchain with G-Cter in ubiquitin). The chain crosses the membrane as a helical span at residues 67–87 (AYVTVSICCLMVAFGGFVFGW). Topologically, residues 88 to 122 (DTGTISGFVAQTDFIRRFGMKHHDGTYYLSKVRTG) are extracellular. Residues 123–143 (LMVSIINIGCAIGGIILAKLG) form a helical membrane-spanning segment. Residues 144–149 (DMYGRK) are Cytoplasmic-facing. The helical transmembrane segment at 150-170 (MGLIVVVVIYIIGIIIQIASI) threads the bilayer. Residues 171–180 (NKWYQYFIGR) are Extracellular-facing. Residues 181-201 (IISGLGVGGIAVLSPMLISEV) form a helical membrane-spanning segment. The Cytoplasmic segment spans residues 202–207 (SPKHIR). Residues 208 to 228 (GTLVSCYQLMITLGIFLGYCT) form a helical membrane-spanning segment. Topologically, residues 229–242 (NYGTKTYTNSVQWR) are extracellular. Residues 243-263 (VPLGLGFAWALFMIGGMTFVP) traverse the membrane as a helical segment. Topologically, residues 264–346 (ESPRYLVEVG…IQSLQQLTGD (83 aa)) are cytoplasmic. A helical transmembrane segment spans residues 347 to 363 (NYFFYYGTTVFTAVGLS). The Extracellular portion of the chain corresponds to 364-369 (DSFETS). Residues 370–387 (IVLGIVNFASTFVGIFLV) traverse the membrane as a helical segment. Over 388–394 (ERYGRRR) the chain is Cytoplasmic. A helical transmembrane segment spans residues 395–415 (CLLWGAASMTACMVVFASVGV). At 416–437 (TRLWPNGKKNGSSKGAGNCMIV) the chain is on the extracellular side. The N-linked (GlcNAc...) asparagine glycan is linked to Asn425. A helical membrane pass occupies residues 438–458 (FTCFYLFCFATTWAPIPFVVN). Residues 459-475 (SETFPLRVKSKCMAIAQ) are Cytoplasmic-facing. Residues 476–496 (ACNWIWGFLIGFFTPFISNAI) traverse the membrane as a helical segment. A topological domain (extracellular) is located at residue Asp497. Residues 498-518 (FYYGYVFMGCLVFSYFYVFFF) form a helical membrane-spanning segment. Residues 519-576 (VPETKGLTLEEVNTLWEEGVLPWKSPSWVPPNKRGTDYNADDLMHDDQPFYKKMFGKK) lie on the Cytoplasmic side of the membrane.

It belongs to the major facilitator superfamily. Sugar transporter (TC 2.A.1.1) family.

The protein localises to the cell membrane. With respect to regulation, xylose uptake is strongly inhibited by glucose. Functionally, low-affinity glucose transporter. Can also transport xylose. The chain is Low-affinity glucose transporter HXT4 (HXT4) from Saccharomyces cerevisiae (strain JAY291) (Baker's yeast).